Reading from the N-terminus, the 1770-residue chain is Transposon Ty2-C Gag-Pol polyprotein (1770 aa).

3 stretches are compositionally biased toward polar residues: residues 1–11, 19–39, and 49–60; these read MESQQLHQNPR, ASVT…SASN, and KVNSQQETTPGT. Disordered regions lie at residues 1 to 88 and 355 to 453; these read MESQ…YQQH and SQYK…LPDH. The interval 295–397 is RNA-binding; the sequence is ENNINVSDRL…SSKPRAAKAH (103 aa). Residues 369–382 are compositionally biased toward low complexity; it reads TSPNTTNTKVTTRN. 2 stretches are compositionally biased toward polar residues: residues 399–408 and 415–435; these read IATSSKFSRV and ESTV…GQQQ. The active-site For protease activity; shared with dimeric partner is D457. Residues 579-636 are integrase-type zinc finger-like; that stretch reads NVNKSKSVNKYPYPLIHRMLGHANFRSIQKSLKKNAVTYLKESDIEWSNASTYQCPDC. One can recognise an Integrase catalytic domain in the interval 656–831; the sequence is ESYEPFQYLH…AGLDITTILP (176 aa). 2 residues coordinate Mg(2+): D667 and D732. Disordered regions lie at residues 1003–1038 and 1057–1205; these read EMGG…MIDL and GGTE…TEIE. Polar residues-rich tracts occupy residues 1009 to 1024 and 1065 to 1082; these read ESDT…FTAR and QRNS…STPS. The Bipartite nuclear localization signal signature appears at 1193–1227; sequence KKRSLEDNETEIEVSRDTWNNKNMRSLEPPRSKKR. A Reverse transcriptase Ty1/copia-type domain is found at 1353–1491; the sequence is NDYYITQLDI…DILGLEIKYQ (139 aa). The Mg(2+) site is built by D1361, D1442, D1443, D1625, E1667, and D1700. The 143-residue stretch at 1625-1767 folds into the RNase H Ty1/copia-type domain; sequence DASYGNQPYY…IKTFKLLTNK (143 aa).

As to quaternary structure, the capsid protein forms a homotrimer, from which the VLPs are assembled. The protease is a homodimer, whose active site consists of two apposed aspartic acid residues. Post-translationally, initially, virus-like particles (VLPs) are composed of the structural unprocessed proteins Gag and Gag-Pol, and also contain the host initiator methionine tRNA (tRNA(i)-Met) which serves as a primer for minus-strand DNA synthesis, and a dimer of genomic Ty RNA. Processing of the polyproteins occurs within the particle and proceeds by an ordered pathway, called maturation. First, the protease (PR) is released by autocatalytic cleavage of the Gag-Pol polyprotein, and this cleavage is a prerequisite for subsequent processing at the remaining sites to release the mature structural and catalytic proteins. Maturation takes place prior to the RT reaction and is required to produce transposition-competent VLPs.

It localises to the cytoplasm. Its subcellular location is the nucleus. It catalyses the reaction DNA(n) + a 2'-deoxyribonucleoside 5'-triphosphate = DNA(n+1) + diphosphate. The enzyme catalyses Endonucleolytic cleavage to 5'-phosphomonoester.. Functionally, capsid protein (CA) is the structural component of the virus-like particle (VLP), forming the shell that encapsulates the retrotransposons dimeric RNA genome. The particles are assembled from trimer-clustered units and there are holes in the capsid shells that allow for the diffusion of macromolecules. CA also has nucleocapsid-like chaperone activity, promoting primer tRNA(i)-Met annealing to the multipartite primer-binding site (PBS), dimerization of Ty2 RNA and initiation of reverse transcription. Its function is as follows. The aspartyl protease (PR) mediates the proteolytic cleavages of the Gag and Gag-Pol polyproteins after assembly of the VLP. In terms of biological role, reverse transcriptase/ribonuclease H (RT) is a multifunctional enzyme that catalyzes the conversion of the retro-elements RNA genome into dsDNA within the VLP. The enzyme displays a DNA polymerase activity that can copy either DNA or RNA templates, and a ribonuclease H (RNase H) activity that cleaves the RNA strand of RNA-DNA heteroduplexes during plus-strand synthesis and hydrolyzes RNA primers. The conversion leads to a linear dsDNA copy of the retrotransposon that includes long terminal repeats (LTRs) at both ends. Integrase (IN) targets the VLP to the nucleus, where a subparticle preintegration complex (PIC) containing at least integrase and the newly synthesized dsDNA copy of the retrotransposon must transit the nuclear membrane. Once in the nucleus, integrase performs the integration of the dsDNA into the host genome. The sequence is that of Transposon Ty2-C Gag-Pol polyprotein (TY2B-C) from Saccharomyces cerevisiae (strain ATCC 204508 / S288c) (Baker's yeast).